The chain runs to 368 residues: Quinolinate synthase (368 aa).

Positions 46 and 63 each coordinate iminosuccinate. Residue Cys-110 coordinates [4Fe-4S] cluster. Iminosuccinate-binding positions include 141-143 (YVN) and Ser-162. Cys-230 lines the [4Fe-4S] cluster pocket. Iminosuccinate is bound by residues 256–258 (HPE) and Thr-273. [4Fe-4S] cluster is bound at residue Cys-320.

Belongs to the quinolinate synthase family. Type 3 subfamily. Requires [4Fe-4S] cluster as cofactor.

The protein resides in the cytoplasm. The enzyme catalyses iminosuccinate + dihydroxyacetone phosphate = quinolinate + phosphate + 2 H2O + H(+). It participates in cofactor biosynthesis; NAD(+) biosynthesis; quinolinate from iminoaspartate: step 1/1. Catalyzes the condensation of iminoaspartate with dihydroxyacetone phosphate to form quinolinate. This Bacillus cereus (strain ZK / E33L) protein is Quinolinate synthase.